The primary structure comprises 374 residues: Chaperone protein DnaJ (374 aa).

Residues 5 to 70 (DYYEVLGVER…SKRAAYDQYG (66 aa)) form the J domain. A CR-type zinc finger spans residues 133–211 (GTTVNIRVPT…CHGEGRVEEY (79 aa)). The Zn(2+) site is built by C146, C149, C163, C166, C185, C188, C199, and C202. CXXCXGXG motif repeat units lie at residues 146 to 153 (CKPCDGSG), 163 to 170 (CPTCGGIG), 185 to 192 (CPRCHGQG), and 199 to 206 (CDSCHGEG).

This sequence belongs to the DnaJ family. Homodimer. Requires Zn(2+) as cofactor.

Its subcellular location is the cytoplasm. Participates actively in the response to hyperosmotic and heat shock by preventing the aggregation of stress-denatured proteins and by disaggregating proteins, also in an autonomous, DnaK-independent fashion. Unfolded proteins bind initially to DnaJ; upon interaction with the DnaJ-bound protein, DnaK hydrolyzes its bound ATP, resulting in the formation of a stable complex. GrpE releases ADP from DnaK; ATP binding to DnaK triggers the release of the substrate protein, thus completing the reaction cycle. Several rounds of ATP-dependent interactions between DnaJ, DnaK and GrpE are required for fully efficient folding. Also involved, together with DnaK and GrpE, in the DNA replication of plasmids through activation of initiation proteins. The polypeptide is Chaperone protein DnaJ (Pseudomonas fluorescens (strain ATCC BAA-477 / NRRL B-23932 / Pf-5)).